The sequence spans 131 residues: Small ribosomal subunit protein uS8 (131 aa).

The protein belongs to the universal ribosomal protein uS8 family. In terms of assembly, part of the 30S ribosomal subunit. Contacts proteins S5 and S12.

Functionally, one of the primary rRNA binding proteins, it binds directly to 16S rRNA central domain where it helps coordinate assembly of the platform of the 30S subunit. This chain is Small ribosomal subunit protein uS8, found in Neorickettsia sennetsu (strain ATCC VR-367 / Miyayama) (Ehrlichia sennetsu).